The sequence spans 145 residues: Male-specific protein scotti (145 aa).

Residues 1–34 (MANNRLMPEGQIIEEDMDGEDQNARELDIDDDDD) are disordered. Positions 12–21 (IIEEDMDGED) are enriched in acidic residues.

Belongs to the male-specific scotti family.

Functionally, post-meiotically transcribed gene that has a role in late spermiogenesis; required for actin cone progression during spermatid individualization. This chain is Male-specific protein scotti, found in Drosophila willistoni (Fruit fly).